The chain runs to 309 residues: MTTPPVLSLALPSDTGRVLSIQSHTVQGYVGNKSAVFPLQLLGYDVDPINSVQFSNHTGYPTFKGQVLNGQQLCDLIEGLEANDLLFYTHVLTGYIGSVSFLDTILEVINKLRSVNPNLTYVCDPVMGDEGKLYVPEELVHVYREKVVPLASMLTPNQFEAEKLTGLRINSEEDGREACAILHAAGPSKVVITSITIGGILLLIGSHQKEKGLKPEQFKILIHKIPAYFTGTGDLMTALLLGWSNKYPDNLDKAAELAVSTLQALLRRTLDDYKRAGYDPTSSSLEIRLIQSQEDIRNPKVELKAERYS.

Thr2 is modified (N-acetylthreonine; in Pyridoxal kinase, N-terminally processed). Residues Ser23 and Thr58 each coordinate pyridoxal. Pyridoxal 5'-phosphate is bound at residue Thr58. Asp124 contacts ATP. Position 124 (Asp124) interacts with Na(+). Asp129 serves as a coordination point for Mg(2+). Thr155 contributes to the Na(+) binding site. Residues 157-160 (NQFE), 193-194 (TS), 225-227 (IPA), and Thr232 contribute to the ATP site. Residue Thr193 coordinates Na(+). 233–234 (GD) serves as a coordination point for pyridoxal 5'-phosphate. The Proton acceptor role is filled by Asp234.

It belongs to the pyridoxine kinase family. In terms of assembly, homodimer. The cofactor is Zn(2+). As to expression, expressed ubiquitously in leaves, stems, roots, flowers and siliques. Present in root hairs and other tip-growing cells such as papillar cells on the top of stigma.

It catalyses the reaction pyridoxal + ATP = pyridoxal 5'-phosphate + ADP + H(+). The protein operates within cofactor metabolism; pyridoxal 5'-phosphate salvage; pyridoxal 5'-phosphate from pyridoxal: step 1/1. In terms of biological role, catalyzes the transfer of a phosphate group from ATP to the 5-hydroxylmethyl group of pyridoxal to form the biologically active pyridoxal phosphate, an active form of vitamin B6. Required for Na(+) and K(+) homeostasis and for salt tolerance. Involved in root hair development, both for initiation and tip growth. The chain is Pyridoxal kinase from Arabidopsis thaliana (Mouse-ear cress).